Reading from the N-terminus, the 364-residue chain is Formate dehydrogenase (364 aa).

The substrate site is built by Val-93 and Asn-119. Residues Arg-174 to Ile-175, Asp-195, Pro-230 to Gly-234, Thr-256, Asp-282, and His-311 to Gly-314 contribute to the NAD(+) site.

It belongs to the D-isomer specific 2-hydroxyacid dehydrogenase family. FDH subfamily. As to quaternary structure, homodimer.

The protein localises to the cytoplasm. The enzyme catalyses formate + NAD(+) = CO2 + NADH. With respect to regulation, cu(2+), Hg and p-chloromercuribenzoate are strong inhibitors of enzyme activity and Ca(2+), Mg(2+), Zn(2+), Mn(2+), Cd(2+) and Sn(2+) have no effect on activity indicating a cysteine residue in the protein is essential for enzyme activity or to maintain the proper structure of the enzyme. Nitrite and nitrate inhibit some enzyme activity, however cyanide, azide, thiocyanate and cyanate are strong inhibitors of the enzymatic reaction. The inhibition of cyanide is competitive with formate and reversible. Its function is as follows. Catalyzes the NAD(+)-dependent oxidation of formate to carbon dioxide. Formate oxidation is the final step in the methanol oxidation pathway in methylotrophic microorganisms. Has a role in the detoxification of exogenous formate in non-methylotrophic organisms. In Candida boidinii (Yeast), this protein is Formate dehydrogenase.